We begin with the raw amino-acid sequence, 694 residues long: DNA polymerase eta (694 aa).

Residues 9–258 (VALVDMDCFF…MPIRKIRSLG (250 aa)) enclose the UmuC domain. Residues Asp13 and Met14 each coordinate Mg(2+). The Mn(2+) site is built by Asp13 and Met14. Residue Arg61 participates in a 2'-deoxyribonucleoside 5'-triphosphate binding. Mg(2+) contacts are provided by Asp115 and Glu116. Residues Asp115 and Glu116 each contribute to the Mn(2+) site. The active site involves Glu116. Residues 565–598 (DSGPDDGAVKPVSSKAVSTEMNVAGDSPNVLDSP) are disordered. Residues 609-643 (ATEDQVLCEKCDSLVPVWDMPEHTDYHFALELQKS) form a UBZ3-type zinc finger. Zn(2+) contacts are provided by Cys616, Cys619, His631, and His635. The segment at 651-694 (KPQAIPAVSPQGKRNPKSPSASSSKRLRPHGMQTLESFFKPLTH) is disordered. Residues Lys663, Lys667, and Lys675 each participate in a glycyl lysine isopeptide (Lys-Gly) (interchain with G-Cter in ubiquitin) cross-link. Positions 682 to 689 (MQTLESFF) match the PIP-box motif. Residue Lys690 forms a Glycyl lysine isopeptide (Lys-Gly) (interchain with G-Cter in ubiquitin) linkage.

It belongs to the DNA polymerase type-Y family. As to quaternary structure, interacts with REV1. Interacts with monoubiquitinated PCNA, but not unmodified PCNA. Interacts with POLI; this interaction targets POLI to the replication machinery. Interacts with PALB2 and BRCA2; the interactions are direct and are required to sustain the recruitment of POLH at blocked replication forks and to stimulate POLH-dependent DNA synthesis on D loop substrates. Interacts (via C-terminus) with TRAIP. Interacts with ubiquitin. Interacts with POLDIP2. Requires Mg(2+) as cofactor. Mn(2+) serves as cofactor. Monoubiquitinated by RCHY1/PIRH2. Ubiquitination depends on integrity of the UBZ3-type zinc finger domain and is enhanced by TRAIP. Ubiquitination inhibits the ability of PolH to interact with PCNA and to bypass UV-induced lesions. As to expression, ubiquitous.

It is found in the nucleus. It catalyses the reaction DNA(n) + a 2'-deoxyribonucleoside 5'-triphosphate = DNA(n+1) + diphosphate. Its activity is regulated as follows. The enzyme in complex with the DNA substrate binds a third divalent metal cation. The binding of this third divalent cation, which is coordinated by water molecules and two oxygen atoms from DNA and dNTP, is essential for catalyzing the DNA synthesis. In terms of biological role, DNA polymerase specifically involved in the DNA repair by translesion synthesis (TLS). Due to low processivity on both damaged and normal DNA, cooperates with the heterotetrameric (REV3L, REV7, POLD2 and POLD3) POLZ complex for complete bypass of DNA lesions. Inserts one or 2 nucleotide(s) opposite the lesion, the primer is further extended by the tetrameric POLZ complex. In the case of 1,2-intrastrand d(GpG)-cisplatin cross-link, inserts dCTP opposite the 3' guanine. Particularly important for the repair of UV-induced pyrimidine dimers. Although inserts the correct base, may cause base transitions and transversions depending upon the context. May play a role in hypermutation at immunoglobulin genes. Forms a Schiff base with 5'-deoxyribose phosphate at abasic sites, but does not have any lyase activity, preventing the release of the 5'-deoxyribose phosphate (5'-dRP) residue. This covalent trapping of the enzyme by the 5'-dRP residue inhibits its DNA synthetic activity during base excision repair, thereby avoiding high incidence of mutagenesis. Targets POLI to replication foci. This Mus musculus (Mouse) protein is DNA polymerase eta (Polh).